The chain runs to 418 residues: 3-isopropylmalate dehydratase large subunit (418 aa).

Positions 299, 359, and 362 each coordinate [4Fe-4S] cluster.

This sequence belongs to the aconitase/IPM isomerase family. LeuC type 2 subfamily. As to quaternary structure, heterodimer of LeuC and LeuD. [4Fe-4S] cluster serves as cofactor.

The enzyme catalyses (2R,3S)-3-isopropylmalate = (2S)-2-isopropylmalate. The protein operates within amino-acid biosynthesis; L-leucine biosynthesis; L-leucine from 3-methyl-2-oxobutanoate: step 2/4. Its function is as follows. Catalyzes the isomerization between 2-isopropylmalate and 3-isopropylmalate, via the formation of 2-isopropylmaleate. The chain is 3-isopropylmalate dehydratase large subunit from Nitratidesulfovibrio vulgaris (strain DSM 19637 / Miyazaki F) (Desulfovibrio vulgaris).